Here is a 294-residue protein sequence, read N- to C-terminus: 33 kDa chaperonin (294 aa).

Intrachain disulfides connect cysteine 230–cysteine 232 and cysteine 263–cysteine 266.

Belongs to the HSP33 family. Under oxidizing conditions two disulfide bonds are formed involving the reactive cysteines. Under reducing conditions zinc is bound to the reactive cysteines and the protein is inactive.

The protein resides in the cytoplasm. In terms of biological role, redox regulated molecular chaperone. Protects both thermally unfolding and oxidatively damaged proteins from irreversible aggregation. Plays an important role in the bacterial defense system toward oxidative stress. The chain is 33 kDa chaperonin from Chromobacterium violaceum (strain ATCC 12472 / DSM 30191 / JCM 1249 / CCUG 213 / NBRC 12614 / NCIMB 9131 / NCTC 9757 / MK).